A 258-amino-acid chain; its full sequence is Tritrans,polycis-undecaprenyl-diphosphate synthase (geranylgeranyl-diphosphate specific) (258 aa).

Aspartate 37 is a catalytic residue. Aspartate 37 is a Mg(2+) binding site. Residues 38-41 (GNRR), histidine 54, and 82-84 (STE) each bind substrate. The active-site Proton acceptor is the asparagine 85. Substrate contacts are provided by residues phenylalanine 86, arginine 88, arginine 207, and 213-215 (RIS). A Mg(2+)-binding site is contributed by glutamate 226.

It belongs to the UPP synthase family. As to quaternary structure, homodimer. Mg(2+) is required as a cofactor.

It carries out the reaction geranylgeranyl diphosphate + 7 isopentenyl diphosphate = tri-trans,hepta-cis-undecaprenyl diphosphate + 7 diphosphate. Functionally, catalyzes the sequential condensation of isopentenyl diphosphate (IPP) with geranylgeranyl diphosphate (GGPP) to yield (2Z,6Z,10Z,14Z,18Z,22Z,26Z,30E,34E,38E)-undecaprenyl diphosphate (tritrans,heptacis-UPP). It is probably the precursor of glycosyl carrier lipids. The sequence is that of Tritrans,polycis-undecaprenyl-diphosphate synthase (geranylgeranyl-diphosphate specific) from Thermoplasma volcanium (strain ATCC 51530 / DSM 4299 / JCM 9571 / NBRC 15438 / GSS1).